Consider the following 1273-residue polypeptide: Cullin-associated NEDD8-dissociated protein 2 (1273 aa).

Position 2 is an N-acetylserine (Ser2). HEAT repeat units lie at residues 2-36 (STGA…LDPL), 37-74 (PWLQ…ELQK), 82-119 (DSER…KVKE), 121-157 (QVEN…ELPP), 167-205 (SVCR…RLGA), 209-246 (TFHA…ACST), 248-284 (LFVE…SVGR), 292-329 (AHLD…KCPK), 364-405 (TEDS…SRPD), 409-446 (DFHC…HTRP), 469-506 (AQVP…VLPG), 554-591 (PHLP…TLWP), 602-641 (PYVG…HLGD), 685-722 (PILA…SQGL), 727-764 (PAVR…TQPA), 768-807 (EVSG…TRPP), 809-850 (VEYS…ALSA), 894-931 (GPQR…GNLP), 933-968 (FLPF…DNLK), 970-1003 (YVED…LVFV), 1004-1040 (NPPF…DQPH), 1044-1081 (PLLK…NKPS), 1085-1121 (DLLD…DDGL), 1142-1178 (LDIC…LCPA), 1194-1231 (TCTA…NPEV), and 1241-1273 (STQI…MELS). The segment at 352-383 (YNHDSDEEEQMETEDSEFSEQESEDEYSDDDD) is disordered. Acidic residues predominate over residues 356-383 (SDEEEQMETEDSEFSEQESEDEYSDDDD).

This sequence belongs to the CAND family. Binds TBP, CNOT3 and UBE3C. Post-translationally, ubiquitinated and targeted for proteasomal degradation. Detected in heart and skeletal muscle.

Its subcellular location is the nucleus. Probable assembly factor of SCF (SKP1-CUL1-F-box protein) E3 ubiquitin ligase complexes that promotes the exchange of the substrate-recognition F-box subunit in SCF complexes, thereby playing a key role in the cellular repertoire of SCF complexes. The protein is Cullin-associated NEDD8-dissociated protein 2 (Cand2) of Rattus norvegicus (Rat).